Here is a 548-residue protein sequence, read N- to C-terminus: Probable 2,3-bisphosphoglycerate-independent phosphoglycerate mutase (548 aa).

Asp-20 and Ser-73 together coordinate Mn(2+). Residue Ser-73 is the Phosphoserine intermediate of the active site. Residues His-134, 164 to 165 (RD), Arg-200, Arg-207, 279 to 282 (RGDR), and Lys-354 each bind substrate. Mn(2+) is bound by residues Asp-422, His-426, Asp-463, His-464, and His-493.

The protein belongs to the BPG-independent phosphoglycerate mutase family. In terms of assembly, monomer. Mn(2+) is required as a cofactor.

It catalyses the reaction (2R)-2-phosphoglycerate = (2R)-3-phosphoglycerate. Its pathway is carbohydrate degradation; glycolysis; pyruvate from D-glyceraldehyde 3-phosphate: step 3/5. In terms of biological role, catalyzes the interconversion of 2-phosphoglycerate and 3-phosphoglycerate. This Leptospira interrogans serogroup Icterohaemorrhagiae serovar copenhageni (strain Fiocruz L1-130) protein is Probable 2,3-bisphosphoglycerate-independent phosphoglycerate mutase (gpmI).